Reading from the N-terminus, the 147-residue chain is Ribosome maturation factor RimP (147 aa).

The protein belongs to the RimP family.

It localises to the cytoplasm. Its function is as follows. Required for maturation of 30S ribosomal subunits. The polypeptide is Ribosome maturation factor RimP (Sulfurihydrogenibium sp. (strain YO3AOP1)).